Here is a 702-residue protein sequence, read N- to C-terminus: Polyribonucleotide nucleotidyltransferase (702 aa).

Mg(2+)-binding residues include Asp-485 and Asp-491. Positions 552–612 constitute a KH domain; sequence PRTEIICIDP…EGVKKAISII (61 aa). Residues 622–690 enclose the S1 motif domain; that stretch reads GEIYLGKVTK…NQGRINLSRK (69 aa).

Belongs to the polyribonucleotide nucleotidyltransferase family. The cofactor is Mg(2+).

The protein localises to the cytoplasm. The enzyme catalyses RNA(n+1) + phosphate = RNA(n) + a ribonucleoside 5'-diphosphate. In terms of biological role, involved in mRNA degradation. Catalyzes the phosphorolysis of single-stranded polyribonucleotides processively in the 3'- to 5'-direction. This is Polyribonucleotide nucleotidyltransferase from Clostridium botulinum (strain Kyoto / Type A2).